A 287-amino-acid chain; its full sequence is MLLKGAPAADGILATVKDNIRSQSGSPGLAVVLIGNNPASEIYVNMKVKRARDLGMISRSYRKPSDATLSDILSLIHELNCDENIHGVLVQLPLPKHLDTQTILSSISPNKDVDGLHPVNMGKLLLGETDGFIPCTPSGIVELFKYYEIPLYGKHVVILGRSNIVGKPLSALLMQKHADTNASVTVLHSQSEHLKEITKTADILVSAIGVPLFVTKEMISEKCIVIDVGTSRVPADNPKGYSLVGDVDFNNVVPVCQAITPVPGGVGPMTVAMLMRNTWESFLRHTL.

Residues Gly160 to Ser162, Ser189, and Thr230 each bind NADP(+).

The protein belongs to the tetrahydrofolate dehydrogenase/cyclohydrolase family. As to quaternary structure, homodimer.

The enzyme catalyses (6R)-5,10-methylene-5,6,7,8-tetrahydrofolate + NADP(+) = (6R)-5,10-methenyltetrahydrofolate + NADPH. The catalysed reaction is (6R)-5,10-methenyltetrahydrofolate + H2O = (6R)-10-formyltetrahydrofolate + H(+). Its pathway is one-carbon metabolism; tetrahydrofolate interconversion. Functionally, catalyzes the oxidation of 5,10-methylenetetrahydrofolate to 5,10-methenyltetrahydrofolate and then the hydrolysis of 5,10-methenyltetrahydrofolate to 10-formyltetrahydrofolate. The sequence is that of Bifunctional protein FolD from Chlamydia muridarum (strain MoPn / Nigg).